The following is a 506-amino-acid chain: uncharacterized protein (506 aa).

The protein belongs to the Mg-chelatase subunits D/I family. ComM subfamily.

This is an uncharacterized protein from Escherichia coli (strain K12).